Here is a 244-residue protein sequence, read N- to C-terminus: DNA repair protein RecO (244 aa).

This sequence belongs to the RecO family.

Its function is as follows. Involved in DNA repair and RecF pathway recombination. This Polynucleobacter necessarius subsp. necessarius (strain STIR1) protein is DNA repair protein RecO.